The chain runs to 66 residues: Large ribosomal subunit protein bL33c (66 aa).

Belongs to the bacterial ribosomal protein bL33 family.

The protein resides in the plastid. It is found in the chloroplast. In Illicium oligandrum (Star anise), this protein is Large ribosomal subunit protein bL33c.